The primary structure comprises 532 residues: 5-methylcytosine-modifying enzyme 1 (532 aa).

An L-ascorbate-binding site is contributed by 335–337 (SLT). Fe cation contacts are provided by His345, Asp347, and His397. L-ascorbate is bound at residue 397 to 399 (HGT).

The protein belongs to the TET family. The cofactor is Fe(2+).

Its subcellular location is the nucleus. The catalysed reaction is a 5-methyl-2'-deoxycytidine in DNA + L-ascorbate + O2 = a (8S,9S)-5-glyceryl-2'-deoxycytidine in DNA + glyoxylate + CO2. It carries out the reaction a 5-methyl-2'-deoxycytidine in DNA + L-ascorbate + O2 = a (8S,9R)-5-glyceryl-2'-deoxycytidine in DNA + glyoxylate + CO2. Dioxygenase that catalyzes DNA modification by mediating the conversion of the modified genomic base 5-methylcytosine (5mC) into 5-glyceryl-methylcytosine (5gmC). Catalyzes the conjugation of a glyceryl moiety from L-ascorbate (vitamin C) to the methyl group of 5mC through a carbon-carbon bond. 5gmC DNA modification may be required during photosynthesis as an epigenetic mark that couteracts DNA methylation. The protein is 5-methylcytosine-modifying enzyme 1 of Chlamydomonas reinhardtii (Chlamydomonas smithii).